We begin with the raw amino-acid sequence, 541 residues long: Chaperonin GroEL 2 (541 aa).

Residues 29-32 (TLGP), 86-90 (DGTTT), glycine 413, 477-479 (NAA), and aspartate 493 each bind ATP.

Belongs to the chaperonin (HSP60) family. In terms of assembly, forms a cylinder of 14 subunits composed of two heptameric rings stacked back-to-back. Interacts with the co-chaperonin GroES.

Its subcellular location is the cytoplasm. The enzyme catalyses ATP + H2O + a folded polypeptide = ADP + phosphate + an unfolded polypeptide.. Its function is as follows. Together with its co-chaperonin GroES, plays an essential role in assisting protein folding. The GroEL-GroES system forms a nano-cage that allows encapsulation of the non-native substrate proteins and provides a physical environment optimized to promote and accelerate protein folding. This Nocardioides sp. (strain ATCC BAA-499 / JS614) protein is Chaperonin GroEL 2.